A 225-amino-acid polypeptide reads, in one-letter code: uncharacterized protein (225 aa).

This is an uncharacterized protein from Schizosaccharomyces pombe (strain 972 / ATCC 24843) (Fission yeast).